The following is a 452-amino-acid chain: NADH-ubiquinone oxidoreductase chain 4 (452 aa).

The next 14 helical transmembrane spans lie at 4–24 (LVLG…SMVW), 29–49 (VGSV…MTIS), 59–79 (FVSL…LLAS), 88–110 (LIYQ…LAFM), 114–136 (LLLF…TRWG), 144–164 (AGTY…ICLI), 182–202 (VFQL…AFLV), 221–241 (PIAG…YGMM), 252–272 (MLSS…MGGI), 282–304 (LIAY…GVAW), 309–331 (AMVL…NLWY), 345–365 (LIMI…MNMA), 390–410 (IVYM…LFGM), and 432–452 (LLTT…GLMF).

Belongs to the complex I subunit 4 family.

The protein localises to the mitochondrion membrane. The enzyme catalyses a ubiquinone + NADH + 5 H(+)(in) = a ubiquinol + NAD(+) + 4 H(+)(out). Its function is as follows. Core subunit of the mitochondrial membrane respiratory chain NADH dehydrogenase (Complex I) that is believed to belong to the minimal assembly required for catalysis. Complex I functions in the transfer of electrons from NADH to the respiratory chain. The immediate electron acceptor for the enzyme is believed to be ubiquinone. This chain is NADH-ubiquinone oxidoreductase chain 4 (ND4), found in Branchiostoma lanceolatum (Common lancelet).